Reading from the N-terminus, the 434-residue chain is Zinc finger protein Pegasus (434 aa).

The segment at 33-57 (VSSDKEAETLQGAGTDSDQNGLDHP) is disordered. 3 C2H2-type zinc fingers span residues 82–104 (LKCR…IRIH), 110–132 (HRCH…MRSH), and 138–161 (YKCE…RRKH). The span at 260–274 (GQLSSLPPDTQNPAS) shows a compositional bias: polar residues. The disordered stretch occupies residues 260–357 (GQLSSLPPDT…PSTPAPALPA (98 aa)). Over residues 296–313 (CASAVSTSVAQSSSPASP) the composition is skewed to low complexity. The span at 337–349 (RTSTPSISNSQPS) shows a compositional bias: polar residues. 2 consecutive C2H2-type zinc fingers follow at residues 364–386 (HHCQ…MGCH) and 392–419 (FQCN…CCQH).

Belongs to the Ikaros C2H2-type zinc-finger protein family. As to quaternary structure, probably self-associates.

It is found in the nucleus. Transcriptional repressor that binds the core 5'GNNTGTNG-3' DNA consensus sequence. This is Zinc finger protein Pegasus (ikzf5) from Xenopus tropicalis (Western clawed frog).